The following is a 556-amino-acid chain: DNA ligase B (556 aa).

Lysine 122 serves as the catalytic N6-AMP-lysine intermediate.

The protein belongs to the NAD-dependent DNA ligase family. LigB subfamily.

The enzyme catalyses NAD(+) + (deoxyribonucleotide)n-3'-hydroxyl + 5'-phospho-(deoxyribonucleotide)m = (deoxyribonucleotide)n+m + AMP + beta-nicotinamide D-nucleotide.. Catalyzes the formation of phosphodiester linkages between 5'-phosphoryl and 3'-hydroxyl groups in double-stranded DNA using NAD as a coenzyme and as the energy source for the reaction. The chain is DNA ligase B from Enterobacter sp. (strain 638).